The sequence spans 318 residues: MFMVNLLTMIVPILLAVAFLTLIERKVLGYMQLRKGPNVVGPYGLLQPMADALKLFIKEPLRPLTSSPSMFIIAPILALTLALTMWIPLPMPHPLINMNLAVLFMLAMSSLAVYSILWSGWASNSKYALIGAMRAVAQTISYEVTLAIILLSVLLLSGSFSLSTLITTQEHTWLMLSSWPLAMMWFISTLAETNRAPFDLTEGESELVSGFNVEYAGGPFALFFMAEYANIIMMNTLTAILFTGAFHNPLMPELYTINLIIKALLLTVFFLWIRASYPRFRYDQLMHLLWKNFLPLTLALCMWHVAMPITMAGIPPQT.

Transmembrane regions (helical) follow at residues 3–23 (MVNL…LTLI), 70–90 (MFII…IPLP), 100–120 (LAVL…LWSG), 146–166 (LAII…STLI), 171–191 (HTWL…STLA), 222–242 (LFFM…AILF), 253–273 (ELYT…FLWI), and 294–314 (LPLT…MAGI).

It belongs to the complex I subunit 1 family.

The protein resides in the mitochondrion inner membrane. The enzyme catalyses a ubiquinone + NADH + 5 H(+)(in) = a ubiquinol + NAD(+) + 4 H(+)(out). Functionally, core subunit of the mitochondrial membrane respiratory chain NADH dehydrogenase (Complex I) that is believed to belong to the minimal assembly required for catalysis. Complex I functions in the transfer of electrons from NADH to the respiratory chain. The immediate electron acceptor for the enzyme is believed to be ubiquinone. The polypeptide is NADH-ubiquinone oxidoreductase chain 1 (MT-ND1) (Pteropus vampyrus (Large flying fox)).